The chain runs to 100 residues: NADH-ubiquinone oxidoreductase chain 4L (100 aa).

Helical transmembrane passes span 3–23 (ILNHFIFTFFLFCLGLFGIIL), 28–48 (IIIILMSIELLLLSINLNFIY), and 64–84 (LILTVAAAESAIGLAIMIVFF).

This sequence belongs to the complex I subunit 4L family.

It is found in the mitochondrion membrane. It catalyses the reaction a ubiquinone + NADH + 5 H(+)(in) = a ubiquinol + NAD(+) + 4 H(+)(out). Its function is as follows. Core subunit of the mitochondrial membrane respiratory chain NADH dehydrogenase (Complex I) that is believed to belong to the minimal assembly required for catalysis. Complex I functions in the transfer of electrons from NADH to the respiratory chain. The immediate electron acceptor for the enzyme is believed to be ubiquinone. The chain is NADH-ubiquinone oxidoreductase chain 4L (ND4L) from Phytophthora infestans (Potato late blight agent).